We begin with the raw amino-acid sequence, 694 residues long: GRB2-associated-binding protein 1 (694 aa).

Ser-2 carries the N-acetylserine modification. One can recognise a PH domain in the interval 5-116; the sequence is EVVCSGWLRK…WVRCICDICG (112 aa). Positions 194–203 are enriched in basic and acidic residues; that stretch reads PEPTRTHADS. The interval 194 to 231 is disordered; the sequence is PEPTRTHADSAKSTSSETDCNDNVPSHKNPASSQSKHG. Over residues 204–230 the composition is skewed to polar residues; it reads AKSTSSETDCNDNVPSHKNPASSQSKH. Phosphoserine is present on residues Ser-251, Ser-253, Ser-266, and Ser-304. Residues 309–378 are disordered; that stretch reads IPPTPGNTYQ…TDSSYCIPTA (70 aa). Over residues 358–374 the composition is skewed to polar residues; it reads DTCSITRTASDTDSSYC. Phosphothreonine is present on Thr-387. Ser-402 and Ser-454 each carry phosphoserine. Disordered stretches follow at residues 492-532 and 560-656; these read PAHM…VKPA and DSSR…ADER. Residues 594 to 611 are compositionally biased toward polar residues; the sequence is PNLSSEDSNLFGSNSLDG. Tyr-627 carries the post-translational modification Phosphotyrosine. A Phosphothreonine modification is found at Thr-638. Residue Ser-651 is modified to Phosphoserine. Position 659 is a phosphotyrosine (Tyr-659). The interval 668 to 694 is disordered; sequence LALKSTREAWTDGRQSTESETPAKNVK. Basic and acidic residues predominate over residues 672-684; the sequence is STREAWTDGRQST. Position 683 is a phosphoserine (Ser-683). A compositionally biased stretch (polar residues) spans 685–694; it reads ESETPAKNVK.

This sequence belongs to the GAB family. Identified in a complex containing FRS2, GRB2, GAB1, PIK3R1 and SOS1. Forms a tripartite complex containing GAB1, METTL13 and SPRY2. Within the complex interacts with METTL13. Interacts with GRB2 and with other SH2-containing proteins. Interacts with phosphorylated LAT2. Interacts with PTPRJ. Interacts (phosphorylated) with PTPN11. Interacts with HCK. Phosphorylated in response to FGFR1 activation. Phosphorylated on tyrosine residue(s) by the epidermal growth factor receptor (EGFR) and the insulin receptor (INSR). Tyrosine phosphorylation of GAB1 mediates interaction with several proteins that contain SH2 domains. Phosphorylated on tyrosine residues by HCK upon IL6 signaling.

Functionally, adapter protein that plays a role in intracellular signaling cascades triggered by activated receptor-type kinases. Plays a role in FGFR1 signaling. Probably involved in signaling by the epidermal growth factor receptor (EGFR) and the insulin receptor (INSR). Involved in the MET/HGF-signaling pathway. The polypeptide is GRB2-associated-binding protein 1 (GAB1) (Bos taurus (Bovine)).